Here is a 639-residue protein sequence, read N- to C-terminus: Probable methyltransferase PMT18 (639 aa).

At 1 to 19 (MAKENSSHSLAEAKRKRLT) the chain is on the cytoplasmic side. A helical; Signal-anchor for type II membrane protein transmembrane segment spans residues 20–42 (WILCVSGLCILSYVLGSWQTNTV). The tract at residues 41 to 86 (TVPTSSSEAYSRMGCDETSTTTRAQTTQTQTNPSSDDTSSSLSSSE) is disordered. Residues 43-639 (PTSSSEAYSR…VKSYWTGPSS (597 aa)) are Lumenal-facing. Over residues 58-85 (TSTTTRAQTTQTQTNPSSDDTSSSLSSS) the composition is skewed to low complexity. 2 N-linked (GlcNAc...) asparagine glycosylation sites follow: N104 and N427.

It belongs to the methyltransferase superfamily.

It is found in the endoplasmic reticulum membrane. The polypeptide is Probable methyltransferase PMT18 (Arabidopsis thaliana (Mouse-ear cress)).